A 1509-amino-acid polypeptide reads, in one-letter code: Myosin-2 heavy chain, non muscle (1509 aa).

The 54-residue stretch at 32–85 folds into the Myosin N-terminal SH3-like domain; it reads SDKTLAWWPTKDADRAFCHVEVTKDDGKNFTVRLENGEEKSQPKNEKNFLGVNP. In terms of domain architecture, Myosin motor spans 89–787; the sequence is DGVEDMGELG…QLAAIEELRE (699 aa). At lysine 133 the chain carries N6,N6,N6-trimethyllysine. Residue 182–189 coordinates ATP; the sequence is GESGAGKT. The tract at residues 623–643 is disordered; sequence APAEEEKAAAGGSRNRSTGRG. Actin-binding regions lie at residues 660–682 and 766–780; these read LAHLMSMLSSTAPHFIRCIIPNL and RFGVTKIFFRSGQLA. The region spanning 790–819 is the IQ domain; it reads ISKMVVSIQAGARAFLARRMYDKMREQTVS. Residues 848-1226 form an alpha-helical tailpiece (S2) region; that stretch reads LISQRNFQKE…AERDSGAQQR (379 aa). Residues 848 to 1509 adopt a coiled-coil conformation; it reads LISQRNFQKE…VRAGSARAEE (662 aa). Composition is skewed to basic and acidic residues over residues 958 to 1019, 1034 to 1047, 1097 to 1107, 1115 to 1141, and 1179 to 1189; these read ELKA…KDAL, KNTERGADDVRNEL, EDARSEVDSLK, KSLKTAKDQNRDLDEQLEDERTVRANV, and QVDETKRRLEE. Disordered stretches follow at residues 958-1049, 1068-1141, 1170-1195, 1213-1259, 1352-1425, and 1474-1509; these read ELKA…ELDD, LAQT…RANV, AAQAKTLKTQVDETKRRLEEAEASAA, ADLD…RLEG, VAKE…NREL, and QLQDEIDGTPSSRGGSTRGASARGASVRAGSARAEE. The segment at 1227 to 1252 is hinge; sequence RKLNTRISELQSELENAPKTGGASSE. Residues 1231–1240 are compositionally biased toward polar residues; that stretch reads TRISELQSEL. Positions 1253 to 1482 are alpha-helical tailpiece (LMM); sequence EVKRLEGELE…AQLQDEIDGT (230 aa). Residues 1253–1509 form a light meromyosin (LMM) region; it reads EVKRLEGELE…VRAGSARAEE (257 aa). The segment at 1483-1509 is nonhelical tailpiece; it reads PSSRGGSTRGASARGASVRAGSARAEE. The segment covering 1484–1509 has biased composition (low complexity); it reads SSRGGSTRGASARGASVRAGSARAEE. Phosphoserine occurs at positions 1489, 1494, and 1499.

It belongs to the TRAFAC class myosin-kinesin ATPase superfamily. Myosin family. In terms of assembly, myosin II heavy chain is two-headed. It self-assembles into filaments. Hexamer of 2 heavy chain subunits (MHC), 2 alkali light chain subunits (MLC) and 2 regulatory light chain subunits (MLC-2).

In terms of biological role, myosin is a protein that binds to F-actin and has ATPase activity that is activated by F-actin. In Acanthamoeba castellanii (Amoeba), this protein is Myosin-2 heavy chain, non muscle.